The sequence spans 105 residues: Flexible cuticle protein 12 (105 aa).

An N-terminal signal peptide occupies residues 1-16; that stretch reads MKSFVVVALLVAVAAA. Positions 37–105 constitute a Chitin-binding type R&amp;R domain; sequence VEGFQYGYET…KPVGAHIPVA (69 aa).

This chain is Flexible cuticle protein 12 (CP12), found in Hyalophora cecropia (Cecropia moth).